The primary structure comprises 491 residues: Katanin p60 ATPase-containing subunit A1 (491 aa).

Residues 1 to 29 are interaction with KATNB1; that stretch reads MSLLMISENVKLAREYALLGNYDSAMVYY. Residues 1–75 form an interaction with dynein and NDEL1 region; that stretch reads MSLLMISENV…VKDIMKTLES (75 aa). The interval 1-185 is interaction with microtubules; that stretch reads MSLLMISENV…EPETNKFDST (185 aa). Phosphoserine; by DYRK2 is present on residues serine 42 and serine 109. Positions 87–185 are disordered; the sequence is QHDLPASEGE…EPETNKFDST (99 aa). Residues 117–144 show a composition bias toward polar residues; sequence SSQYSDPKSHGNRPSTTVRVHRSSAQNV. Phosphothreonine; by DYRK2 is present on threonine 133. Residues 145 to 169 are compositionally biased toward basic and acidic residues; sequence HNDRGKAVRCREKKEQNKGREEKNK. The residue at position 170 (serine 170) is a Phosphoserine. Position 249–256 (249–256) interacts with ATP; sequence GPPGTGKT.

The protein belongs to the AAA ATPase family. Katanin p60 subunit A1 subfamily. Can homooligomerize into hexameric rings, which may be promoted by interaction with microtubules. Interacts with KATNB1, which may serve as a targeting subunit. Interacts with ASPM; the katanin complex formation KATNA1:KATNB1 is required for the association of ASPM. Interacts with dynein and NDEL1. Associates with the E3 ligase complex containing DYRK2, EDD/UBR5, DDB1 and DCAF1 proteins (EDVP complex). Interacts with KLHL42 (via the kelch domains). Interacts with CUL3; the interaction is enhanced by KLHL42. Interacts with KATNB1 and KATNBL1. Interacts with CAMSAP2 and CAMSAP3; leading to regulate the length of CAMSAP-decorated microtubule stretches. Phosphorylation by DYRK2 triggers ubiquitination and subsequent degradation. In terms of processing, ubiquitinated by the BCR(KLHL42) E3 ubiquitin ligase complex, leading to its proteasomal degradation. Ubiquitinated by the EDVP E3 ligase complex and subsequently targeted for proteasomal degradation.

It is found in the cytoplasm. The protein localises to the midbody. Its subcellular location is the cytoskeleton. It localises to the microtubule organizing center. The protein resides in the centrosome. It is found in the spindle pole. The protein localises to the spindle. The enzyme catalyses n ATP + n H2O + a microtubule = n ADP + n phosphate + (n+1) alpha/beta tubulin heterodimers.. With respect to regulation, ATPase activity is stimulated by microtubules, which promote homooligomerization. ATP-dependent microtubule severing is stimulated by interaction with KATNB1. Catalytic subunit of a complex which severs microtubules in an ATP-dependent manner. Microtubule severing may promote rapid reorganization of cellular microtubule arrays and the release of microtubules from the centrosome following nucleation. Microtubule release from the mitotic spindle poles may allow depolymerization of the microtubule end proximal to the spindle pole, leading to poleward microtubule flux and poleward motion of chromosome. Microtubule release within the cell body of neurons may be required for their transport into neuronal processes by microtubule-dependent motor proteins. This transport is required for axonal growth. This is Katanin p60 ATPase-containing subunit A1 from Homo sapiens (Human).